The chain runs to 354 residues: Methionine import ATP-binding protein MetN (354 aa).

The 243-residue stretch at 8–250 (LDHIDITFRQ…PKEALTQKFI (243 aa)) folds into the ABC transporter domain. 42–49 (GYSGAGKS) lines the ATP pocket.

The protein belongs to the ABC transporter superfamily. Methionine importer (TC 3.A.1.24) family. In terms of assembly, the complex is composed of two ATP-binding proteins (MetN), two transmembrane proteins (MetI) and a solute-binding protein (MetQ).

The protein localises to the cell membrane. The catalysed reaction is L-methionine(out) + ATP + H2O = L-methionine(in) + ADP + phosphate + H(+). The enzyme catalyses D-methionine(out) + ATP + H2O = D-methionine(in) + ADP + phosphate + H(+). Part of the ABC transporter complex MetNIQ involved in methionine import. Responsible for energy coupling to the transport system. The polypeptide is Methionine import ATP-binding protein MetN (Streptococcus pyogenes serotype M6 (strain ATCC BAA-946 / MGAS10394)).